The primary structure comprises 106 residues: CRISPR-associated endoribonuclease Cas2 (106 aa).

Asp-22 serves as a coordination point for Mg(2+).

This sequence belongs to the CRISPR-associated endoribonuclease Cas2 protein family. As to quaternary structure, homodimer, forms a heterotetramer with a Cas1 homodimer. Mg(2+) serves as cofactor.

Functionally, CRISPR (clustered regularly interspaced short palindromic repeat), is an adaptive immune system that provides protection against mobile genetic elements (viruses, transposable elements and conjugative plasmids). CRISPR clusters contain sequences complementary to antecedent mobile elements and target invading nucleic acids. CRISPR clusters are transcribed and processed into CRISPR RNA (crRNA). Functions as a ssRNA-specific endoribonuclease. Involved in the integration of spacer DNA into the CRISPR cassette. The protein is CRISPR-associated endoribonuclease Cas2 of Fusobacterium nucleatum subsp. nucleatum (strain ATCC 25586 / DSM 15643 / BCRC 10681 / CIP 101130 / JCM 8532 / KCTC 2640 / LMG 13131 / VPI 4355).